We begin with the raw amino-acid sequence, 319 residues long: Malate dehydrogenase (319 aa).

NAD(+) is bound by residues Gly-10 to Gly-15 and Asp-34. The substrate site is built by Arg-83 and Arg-89. NAD(+) is bound by residues Asn-96 and Ile-119–Asn-121. Residues Asn-121 and Arg-152 each coordinate substrate. His-176 serves as the catalytic Proton acceptor.

This sequence belongs to the LDH/MDH superfamily. MDH type 3 family.

It catalyses the reaction (S)-malate + NAD(+) = oxaloacetate + NADH + H(+). In terms of biological role, catalyzes the reversible oxidation of malate to oxaloacetate. In Francisella philomiragia subsp. philomiragia (strain ATCC 25017 / CCUG 19701 / FSC 153 / O#319-036), this protein is Malate dehydrogenase.